The primary structure comprises 569 residues: Cationic amino acid transporter 5 (569 aa).

Topologically, residues 1-67 are cytoplasmic; it reads MEGEERGYWR…KQSEHEMKRC (67 aa). The helical transmembrane segment at 68–88 threads the bilayer; sequence LTWWDLVWFGFGSVIGAGIFV. The Extracellular portion of the chain corresponds to 89 to 97; sequence LTGQEAHEQ. A helical transmembrane segment spans residues 98-118; that stretch reads AGPAIVLSYVVSGLSAMLSVF. At 119 to 143 the chain is on the cytoplasmic side; it reads CYTEFAVEIPVAGGSFAYLRIELGD. Residues 144–164 form a helical membrane-spanning segment; sequence FAAFITAGNILLESIVGTAAV. Over 165-192 the chain is Extracellular; the sequence is ARAWTSYFATLLNRSPNALRIKTDLSSG. The chain crosses the membrane as a helical span at residues 193–213; the sequence is FNLLDPIAVVVIAASATIASI. Residues 214–222 lie on the Cytoplasmic side of the membrane; sequence STRKTSLLN. A helical membrane pass occupies residues 223–243; it reads WIASAINTLVIFFVIIAGFIH. Topologically, residues 244-251 are extracellular; sequence ADTSNLTP. Residues 252 to 272 form a helical membrane-spanning segment; sequence FLPFGPEGVFRAAAVVYFAYG. Residues 273–290 are Cytoplasmic-facing; that stretch reads GFDSIATMAEETKNPSRD. Residues 291-311 traverse the membrane as a helical segment; sequence IPIGLLGSMSIITVIYCLMAL. The Extracellular portion of the chain corresponds to 312-341; sequence SLSMMQKYTDIDPNAAYSVAFQSVGMKWGK. The chain crosses the membrane as a helical span at residues 342–362; sequence YLVALGALKGMTTVLLVGALG. Residues 363 to 389 lie on the Cytoplasmic side of the membrane; sequence QARYVTHIARTHMIPPIFALVHPKTGT. The helical transmembrane segment at 390-410 threads the bilayer; that stretch reads PINANLLVAIPSALIAFFSGL. Position 411 (Asp411) is a topological domain, extracellular. A helical membrane pass occupies residues 412–432; sequence VLASLLSISTLFIFTMMPIAL. At 433–450 the chain is on the cytoplasmic side; that stretch reads LVRRYYVRQDTPRVHLIK. Residues 451 to 471 traverse the membrane as a helical segment; it reads LITCLLFVVVSSMGTSAYWGM. Residues 472–477 are Extracellular-facing; that stretch reads QRKGSW. A helical transmembrane segment spans residues 478 to 498; it reads IGYTVTVPFWFLGTLGIVFFV. The Cytoplasmic portion of the chain corresponds to 499 to 505; it reads PQQRTPK. A helical membrane pass occupies residues 506–526; the sequence is VWGVPLVPWLPCLSIATNIFL. The Extracellular portion of the chain corresponds to 527–537; it reads MGSLGAMAFVR. Residues 538–558 traverse the membrane as a helical segment; sequence FGVCTLAMLLYYFLLGLHATF. The Cytoplasmic portion of the chain corresponds to 559-569; sequence DMAHQQIVPRT.

The protein belongs to the amino acid-polyamine-organocation (APC) superfamily. Cationic amino acid transporter (CAT) (TC 2.A.3.3) family. In terms of tissue distribution, expressed in roots, stems, flowers, seeds, and leaves. Mostly present in leaf rims and cotyledons of developing seedlings.

The protein resides in the cell membrane. High-affinity permease involved in the transport of the cationic amino acids (e.g. arginine, and, to a lower extent, citrulline and glutamate). Transport mostly basic amino acids, and, to a lower extent neutral and acidic amino acids. The sequence is that of Cationic amino acid transporter 5 (CAT5) from Arabidopsis thaliana (Mouse-ear cress).